The chain runs to 1504 residues: DNA-directed RNA polymerase subunit beta' (1504 aa).

Zn(2+) contacts are provided by cysteine 60, cysteine 62, cysteine 75, and cysteine 78. Positions 265 to 294 are disordered; the sequence is RKQRDLEDAEQLTGAERERKEYEASQERER. Residues 279-294 show a composition bias toward basic and acidic residues; sequence AERERKEYEASQERER. Mg(2+) is bound by residues aspartate 626, aspartate 628, and aspartate 630. Positions 1002, 1075, 1082, and 1085 each coordinate Zn(2+). The segment at 1468 to 1504 is disordered; sequence RALIGGDGDDGERNNGDFDDQVGEDVVIPPDDDDQEA.

The protein belongs to the RNA polymerase beta' chain family. In terms of assembly, the RNAP catalytic core consists of 2 alpha, 1 beta, 1 beta' and 1 omega subunit. When a sigma factor is associated with the core the holoenzyme is formed, which can initiate transcription. The cofactor is Mg(2+). Zn(2+) is required as a cofactor.

The enzyme catalyses RNA(n) + a ribonucleoside 5'-triphosphate = RNA(n+1) + diphosphate. In terms of biological role, DNA-dependent RNA polymerase catalyzes the transcription of DNA into RNA using the four ribonucleoside triphosphates as substrates. The sequence is that of DNA-directed RNA polymerase subunit beta' from Roseiflexus sp. (strain RS-1).